A 462-amino-acid polypeptide reads, in one-letter code: MGKTLFDKLWNRHVIYGKEGEPQLLYVDLHLIHEVTSPQAFEGLRMENRPLRRPDKTFATMDHNVPTEDIFNIQDLVAKKQIEALQTNCEEFGVTLADMGSDRQGIVHMVGPETGLTQPGKVIVCGDSHTATHGAFGAIGFGIGSSEVEHVFATQTIWQQKPKSMGIEINGNLPKGVYAKDIILHLIATYGVAFGTGYAVEYYGETIRNMSMEERMTICNMAIEGGAKMGMMAPDETTFEYVRGREYAPADMDKAISDWKTLQTDPDAEYDLHIKMDASILEPYVTWGTNPEMGVPFSKAFPEIKDMNYERAYEYMGLKPGQTAEEIELGYVFIGSCTNARLSDLEEAARIVKGNKVKNNIRALVVPGSRQVRNAAESIGLDKIFIEAGFEWREPGCSMCLGMNPDQVPDGVHCASTSNRNFEGRQGKGARTHLVSPAMAAAAAINGHFIDIRKEAVISGGN.

[4Fe-4S] cluster contacts are provided by cysteine 337, cysteine 397, and cysteine 400.

Belongs to the aconitase/IPM isomerase family. LeuC type 1 subfamily. As to quaternary structure, heterodimer of LeuC and LeuD. The cofactor is [4Fe-4S] cluster.

The enzyme catalyses (2R,3S)-3-isopropylmalate = (2S)-2-isopropylmalate. It functions in the pathway amino-acid biosynthesis; L-leucine biosynthesis; L-leucine from 3-methyl-2-oxobutanoate: step 2/4. In terms of biological role, catalyzes the isomerization between 2-isopropylmalate and 3-isopropylmalate, via the formation of 2-isopropylmaleate. The polypeptide is 3-isopropylmalate dehydratase large subunit (Listeria monocytogenes serotype 4b (strain CLIP80459)).